Reading from the N-terminus, the 414-residue chain is Dimethylsulfoniopropionate lyase DddY (414 aa).

The signal sequence occupies residues 1-18 (MKYMVLFSGLLFSNVLVA).

It belongs to the DMSP lyase DddY family.

It is found in the periplasm. It carries out the reaction S,S-dimethyl-beta-propiothetin = acrylate + dimethyl sulfide + H(+). Its function is as follows. Catalyzes the cleavage of dimethylsulfoniopropionate (DMSP) into dimethyl sulfide (DMS) and acrylate. The chain is Dimethylsulfoniopropionate lyase DddY from Shewanella woodyi (strain ATCC 51908 / MS32).